The sequence spans 257 residues: NAD-capped RNA hydrolase NudC (257 aa).

The substrate site is built by lysine 25 and arginine 69. Zn(2+) contacts are provided by cysteine 98 and cysteine 101. Glutamate 111 is a binding site for substrate. The Zn(2+) site is built by cysteine 116 and cysteine 119. Tyrosine 124 contributes to the substrate binding site. A Nudix hydrolase domain is found at 125–248 (PQIAPCIIVA…TVARRLIEDT (124 aa)). A divalent metal cation-binding residues include alanine 158, glutamate 174, and glutamate 178. A Nudix box motif is present at residues 159–180 (GFVEVGETLEQAVAREVMEESG). 192–199 (QPWPFPQS) lines the substrate pocket. An a divalent metal cation-binding site is contributed by glutamate 219. Alanine 241 contacts substrate.

This sequence belongs to the Nudix hydrolase family. NudC subfamily. In terms of assembly, homodimer. Requires Mg(2+) as cofactor. The cofactor is Mn(2+). It depends on Zn(2+) as a cofactor.

It carries out the reaction a 5'-end NAD(+)-phospho-ribonucleoside in mRNA + H2O = a 5'-end phospho-adenosine-phospho-ribonucleoside in mRNA + beta-nicotinamide D-ribonucleotide + 2 H(+). The catalysed reaction is NAD(+) + H2O = beta-nicotinamide D-ribonucleotide + AMP + 2 H(+). The enzyme catalyses NADH + H2O = reduced beta-nicotinamide D-ribonucleotide + AMP + 2 H(+). Its function is as follows. mRNA decapping enzyme that specifically removes the nicotinamide adenine dinucleotide (NAD) cap from a subset of mRNAs by hydrolyzing the diphosphate linkage to produce nicotinamide mononucleotide (NMN) and 5' monophosphate mRNA. The NAD-cap is present at the 5'-end of some mRNAs and stabilizes RNA against 5'-processing. Has preference for mRNAs with a 5'-end purine. Catalyzes the hydrolysis of a broad range of dinucleotide pyrophosphates. This Escherichia coli (strain 55989 / EAEC) protein is NAD-capped RNA hydrolase NudC.